The sequence spans 1960 residues: Myosin-9 (1960 aa).

The residue at position 2 (Ala2) is an N-acetylalanine. Residues 2-838 (AQQAADKYLY…RLFTKVKPLL (837 aa)) are mediates interaction with LIMCH1. The residue at position 8 (Lys8) is an N6-acetyllysine. At Tyr11 the chain carries Phosphotyrosine. The region spanning 27 to 77 (AAKKLVWVPSSKNGFEPASLKEEVGEEAIVELVENGKKVKVNKDDIQKMNP) is the Myosin N-terminal SH3-like domain. The region spanning 81-776 (SKVEDMAELT…VLAHLEEERD (696 aa)) is the Myosin motor domain. Lys102 is modified (N6-acetyllysine). Position 174–181 (174–181 (GESGAGKT)) interacts with ATP. Residues Lys299, Lys435, and Lys613 each carry the N6-acetyllysine modification. At Ser628 the chain carries Phosphoserine. The segment at 654–676 (LAKLMATLRNTNPNFVRCIIPNH) is actin-binding. Tyr754 is modified (phosphotyrosine). Positions 779–808 (ITDVIIGFQACCRGYLARKAFAKRQQQLTA) constitute an IQ domain. The stretch at 841–1926 (IRHEDELLAK…LKNKLRRGDL (1086 aa)) forms a coiled coil. Lys850 is subject to N6-succinyllysine. An N6-acetyllysine mark is found at Lys860, Lys975, and Lys1024. Residues 1035–1055 (RLRREEKQRQELEKTRRKLEG) are compositionally biased toward basic and acidic residues. Residues 1035–1057 (RLRREEKQRQELEKTRRKLEGDS) are disordered. The residue at position 1114 (Ser1114) is a Phosphoserine. A disordered region spans residues 1117–1167 (QEDLESERASRNKAEKQKRDLGEELEALKTELEDTLDSTAAQQELRSKREQ). Over residues 1122–1148 (SERASRNKAEKQKRDLGEELEALKTEL) the composition is skewed to basic and acidic residues. Residues Lys1234 and Lys1249 each carry the N6-acetyllysine modification. The interval 1327–1352 (LSTKLKQMEDEKNSFREQLEEEEEAK) is disordered. Residues 1332–1352 (KQMEDEKNSFREQLEEEEEAK) are compositionally biased toward basic and acidic residues. Lys1357, Lys1392, Lys1404, Lys1410, Lys1459, and Lys1638 each carry N6-acetyllysine. Lys1669 carries the N6-succinyllysine modification. Phosphoserine is present on Ser1714. Residues 1768–1788 (LERSHAQKNENARQQLERQNK) form a disordered region. 3 positions are modified to N6-acetyllysine: Lys1793, Lys1802, and Lys1845. The segment at 1877-1908 (RQLEEAEEEAQRANASRRKLQRELEDATETAD) is disordered. Arg1923 bears the Omega-N-methylarginine mark. Thr1939 bears the Phosphothreonine mark. The segment at 1939-1960 (TGDCSDEEVDGKADGADAKAAE) is disordered. Phosphoserine is present on Ser1943. The segment covering 1948–1960 (DGKADGADAKAAE) has biased composition (basic and acidic residues).

Belongs to the TRAFAC class myosin-kinesin ATPase superfamily. Myosin family. Myosin is a hexameric protein that consists of 2 heavy chain subunits (MHC), 2 alkali light chain subunits (MLC) and 2 regulatory light chain subunits (MLC-2). Interacts with RASIP1. Interacts with DDR1. Interacts with PDLIM2. Interacts with SVIL. Interacts with HTRA3. Interacts with Myo7a. Interacts with CFAP95. Interacts with LIMCH1; independently of the integration of MYH9 into the myosin complex. Interacts with RAB3A. Interacts with ZBED4. Interacts with S100A4; this interaction increases cell motility. ISGylated. In terms of processing, ubiquitination.

The protein resides in the cytoplasm. It localises to the cytoskeleton. It is found in the cell cortex. The protein localises to the cytoplasmic vesicle. Its subcellular location is the secretory vesicle. The protein resides in the cortical granule. In terms of biological role, cellular myosin that appears to play a role in cytokinesis, cell shape, and specialized functions such as secretion and capping. Required for cortical actin clearance prior to oocyte exocytosis. Promotes cell motility in conjunction with S100A4. During cell spreading, plays an important role in cytoskeleton reorganization, focal contact formation (in the margins but not the central part of spreading cells), and lamellipodial retraction; this function is mechanically antagonized by MYH10. The chain is Myosin-9 (Myh9) from Mus musculus (Mouse).